The following is a 784-amino-acid chain: DNA repair and recombination protein RAD54-like (784 aa).

Residues 1-54 form a disordered region; sequence MRRSLAPSQRGPMRPESRHSFTPPLLKKNKRSCQQELEREQELDRKRQSALRDA. The tract at residues 2–9 is required for chromatin remodeling, strand pairing activities and coupling of ATPase activity; it reads RRSLAPSQ. Residue Ser-20 is modified to Phosphoserine. Residue Thr-22 is modified to Phosphothreonine. Positions 36 to 47 are enriched in basic and acidic residues; that stretch reads ELEREQELDRKR. Positions 172 to 346 constitute a Helicase ATP-binding domain; that stretch reads EGKRGNFNGC…YSLVNFVNPE (175 aa). 185-192 is a binding site for ATP; it reads DEMGLGKT. Residues 297–300 carry the DEGH box motif; the sequence is DEGH. One can recognise a Helicase C-terminal domain in the interval 503 to 660; the sequence is LLDFMLAAIR…NNESAEKHFT (158 aa). A disordered region spans residues 751 to 784; that stretch reads EEAASEQPEEKPDRRKRPSTPPSDDSADEDFLGF. A compositionally biased stretch (acidic residues) spans 775-784; the sequence is DSADEDFLGF.

The protein belongs to the SNF2/RAD54 helicase family. As to quaternary structure, interacts (via N-terminus) with spn-A/Rad51.

It localises to the nucleus. Involved in mitotic DNA repair and meiotic recombination. Functions in the recombinational DNA repair pathway. Essential for interhomolog gene conversion (GC), but may have a less important role in intersister GC than spn-A/Rad51. In the presence of DNA, spn-A/Rad51 enhances the ATPase activity of okr/Rad54. This is DNA repair and recombination protein RAD54-like from Drosophila yakuba (Fruit fly).